We begin with the raw amino-acid sequence, 220 residues long: Small ribosomal subunit protein eS8 (220 aa).

This sequence belongs to the eukaryotic ribosomal protein eS8 family.

This Leishmania major protein is Small ribosomal subunit protein eS8 (RPS8A).